A 233-amino-acid chain; its full sequence is Cilia- and flagella-associated protein 299 (233 aa).

Its subcellular location is the cytoplasm. It is found in the nucleus. In terms of biological role, may be involved in spermatogenesis. The protein is Cilia- and flagella-associated protein 299 of Homo sapiens (Human).